The primary structure comprises 352 residues: Ketol-acid reductoisomerase (NAD(+)) (352 aa).

The KARI N-terminal Rossmann domain occupies 11-199 (ENVVTSEEFT…AIGSGYLFPT (189 aa)). NAD(+) contacts are provided by residues 38-41 (YGVQ) and 100-103 (DAGQ). His-124 is an active-site residue. Gly-153 lines the NAD(+) pocket. The KARI C-terminal knotted domain occupies 200–347 (TFEKEVFSDL…AAVRALRPEN (148 aa)). Mg(2+) contacts are provided by Asp-208, Glu-212, Glu-244, and Glu-248. Position 270 (Ser-270) interacts with substrate.

It belongs to the ketol-acid reductoisomerase family. Requires Mg(2+) as cofactor.

It carries out the reaction (2R)-2,3-dihydroxy-3-methylbutanoate + NAD(+) = (2S)-2-acetolactate + NADH + H(+). The protein operates within amino-acid biosynthesis; L-isoleucine biosynthesis; L-isoleucine from 2-oxobutanoate: step 2/4. It participates in amino-acid biosynthesis; L-valine biosynthesis; L-valine from pyruvate: step 2/4. Its function is as follows. Involved in the biosynthesis of branched-chain amino acids (BCAA). Catalyzes an alkyl-migration followed by a ketol-acid reduction of (S)-2-acetolactate (S2AL) to yield (R)-2,3-dihydroxy-isovalerate. In the isomerase reaction, S2AL is rearranged via a Mg-dependent methyl migration to produce 3-hydroxy-3-methyl-2-ketobutyrate (HMKB). In the reductase reaction, this 2-ketoacid undergoes a metal-dependent reduction by NADH to yield (R)-2,3-dihydroxy-isovalerate. This is Ketol-acid reductoisomerase (NAD(+)) from Desulfosudis oleivorans (strain DSM 6200 / JCM 39069 / Hxd3) (Desulfococcus oleovorans).